The sequence spans 121 residues: Immunoglobulin kappa variable 2-40 (121 aa).

The first 19 residues, 1–19 (MRLPAQLLGLLMLWVPGSS), serve as a signal peptide directing secretion. The region spanning 20 to 121 (EDIVMTQTPL…YYCMQRIEFP (102 aa)) is the Ig-like domain. Positions 21–43 (DIVMTQTPLSLPVTPGEPASISC) are framework-1. Cysteines 43 and 114 form a disulfide. Residues 44–60 (RSSQSLLDSDDGNTYLD) form a complementarity-determining-1 region. The segment at 61 to 75 (WYLQKPGQSPQLLIY) is framework-2. The complementarity-determining-2 stretch occupies residues 76-82 (TLSYRAS). Residues 83-114 (GVPDRFSGSGSGTDFTLKISRVEAEDVGVYYC) form a framework-3 region. The tract at residues 115 to 121 (MQRIEFP) is complementarity-determining-3.

Immunoglobulins are composed of two identical heavy chains and two identical light chains; disulfide-linked.

The protein resides in the secreted. The protein localises to the cell membrane. Its function is as follows. V region of the variable domain of immunoglobulin light chains that participates in the antigen recognition. Immunoglobulins, also known as antibodies, are membrane-bound or secreted glycoproteins produced by B lymphocytes. In the recognition phase of humoral immunity, the membrane-bound immunoglobulins serve as receptors which, upon binding of a specific antigen, trigger the clonal expansion and differentiation of B lymphocytes into immunoglobulins-secreting plasma cells. Secreted immunoglobulins mediate the effector phase of humoral immunity, which results in the elimination of bound antigens. The antigen binding site is formed by the variable domain of one heavy chain, together with that of its associated light chain. Thus, each immunoglobulin has two antigen binding sites with remarkable affinity for a particular antigen. The variable domains are assembled by a process called V-(D)-J rearrangement and can then be subjected to somatic hypermutations which, after exposure to antigen and selection, allow affinity maturation for a particular antigen. The sequence is that of Immunoglobulin kappa variable 2-40 from Homo sapiens (Human).